A 203-amino-acid polypeptide reads, in one-letter code: Small ribosomal subunit protein uS4 (203 aa).

The 62-residue stretch at 93–154 (RRLDNVVYRC…KSRNLDAVAD (62 aa)) folds into the S4 RNA-binding domain.

The protein belongs to the universal ribosomal protein uS4 family. Part of the 30S ribosomal subunit. Contacts protein S5. The interaction surface between S4 and S5 is involved in control of translational fidelity.

Functionally, one of the primary rRNA binding proteins, it binds directly to 16S rRNA where it nucleates assembly of the body of the 30S subunit. In terms of biological role, with S5 and S12 plays an important role in translational accuracy. The polypeptide is Small ribosomal subunit protein uS4 (Chlorobaculum tepidum (strain ATCC 49652 / DSM 12025 / NBRC 103806 / TLS) (Chlorobium tepidum)).